We begin with the raw amino-acid sequence, 452 residues long: Tubulin beta-2 chain (452 aa).

Residues Gln-11, Glu-74, Ser-143, Val-147, Thr-148, Gly-149, Asn-209, and Asn-231 each coordinate GTP. Glu-74 provides a ligand contact to Mg(2+). Residues 431–452 (QEATADDEAEFEEEGEVEGEYD) form a disordered region. A compositionally biased stretch (acidic residues) spans 434 to 452 (TADDEAEFEEEGEVEGEYD).

Belongs to the tubulin family. Dimer of alpha and beta chains. A typical microtubule is a hollow water-filled tube with an outer diameter of 25 nm and an inner diameter of 15 nM. Alpha-beta heterodimers associate head-to-tail to form protofilaments running lengthwise along the microtubule wall with the beta-tubulin subunit facing the microtubule plus end conferring a structural polarity. Microtubules usually have 13 protofilaments but different protofilament numbers can be found in some organisms and specialized cells. Mg(2+) serves as cofactor.

The protein resides in the cytoplasm. The protein localises to the cytoskeleton. Its function is as follows. Tubulin is the major constituent of microtubules, a cylinder consisting of laterally associated linear protofilaments composed of alpha- and beta-tubulin heterodimers. Microtubules grow by the addition of GTP-tubulin dimers to the microtubule end, where a stabilizing cap forms. Below the cap, tubulin dimers are in GDP-bound state, owing to GTPase activity of alpha-tubulin. This chain is Tubulin beta-2 chain, found in Homarus americanus (American lobster).